A 246-amino-acid polypeptide reads, in one-letter code: NH(3)-dependent NAD(+) synthetase (246 aa).

ATP is bound at residue 29 to 36 (GLSGGIDS). Asp35 lines the Mg(2+) pocket. Arg110 is a binding site for deamido-NAD(+). An ATP-binding site is contributed by Thr130. Residue Glu135 coordinates Mg(2+). Residues Lys159 and Ser181 each contribute to the ATP site.

It belongs to the NAD synthetase family. Homodimer.

It carries out the reaction deamido-NAD(+) + NH4(+) + ATP = AMP + diphosphate + NAD(+) + H(+). It functions in the pathway cofactor biosynthesis; NAD(+) biosynthesis; NAD(+) from deamido-NAD(+) (ammonia route): step 1/1. Functionally, catalyzes the ATP-dependent amidation of deamido-NAD to form NAD. Uses ammonia as a nitrogen source. The sequence is that of NH(3)-dependent NAD(+) synthetase from Campylobacter jejuni subsp. doylei (strain ATCC BAA-1458 / RM4099 / 269.97).